The sequence spans 86 residues: Kappa-theraphotoxin-Cg1a 2 (86 aa).

An N-terminal signal peptide occupies residues 1 to 21 (MKVSVVITLAVLGVMFVWASA). Residues 22 to 50 (AELEERGSDQRDSPAWLKSMERIFQSEER) constitute a propeptide that is removed on maturation. 3 disulfides stabilise this stretch: C52–C66, C59–C71, and C65–C78. Residue F84 is modified to Phenylalanine amide.

The protein belongs to the neurotoxin 10 (Hwtx-1) family. 28 (Jztx-11) subfamily. As to expression, expressed by the venom gland.

It is found in the secreted. This toxin acts as a voltage-dependent gating-modifier. It inhibits the sodium conductance (IC(50)=124 nM) and slows the fast inactivation (EC(50)=1180 nM) of Nav1.5/SCN5A. It significantly shifts the activation to more depolarized voltages and decreases the deactivation of Nav1.5 currents upon extreme depolarization, but only slightly affects voltage-dependence of steady-state inactivation. In addition, this toxin causes an approximately five-fold decrease in the rate of recovery from inactivation and an approximately 1.9-fold reduction in the closed-state inactivation rate. This toxin integrates the functions of site 3 toxins (alpha-scorpion toxins) with site 4 toxins (beta-scorpion and spider toxins) by targeting multiple sites on Nav1.5. Also shows inhibition of voltage-gated potassium channels (5 uM completely inhibits Kv2.1/KCNB1, whereas 5 uM moderately inhibits Kv4.2/KCND2 Kv4.1/KCND1 channels). The sequence is that of Kappa-theraphotoxin-Cg1a 2 from Chilobrachys guangxiensis (Chinese earth tiger tarantula).